A 335-amino-acid polypeptide reads, in one-letter code: Ficolin-1 (335 aa).

A signal peptide spans 1–17 (MWWPMLWAFPVLLCLCS). Positions 47–114 (SCPSFPGPPG…TASPLGQKEL (68 aa)) are disordered. The Collagen-like domain maps to 50–88 (SFPGPPGPKGEPGSPAGRGERGLQGSPGKMGPPGSKGEP). A compositionally biased stretch (low complexity) spans 75 to 88 (SPGKMGPPGSKGEP). A Fibrinogen C-terminal domain is found at 117–335 (ALCRRGPRSC…KVAEMKIRAS (219 aa)). 2 cysteine pairs are disulfide-bonded: cysteine 119/cysteine 147 and cysteine 126/cysteine 154. Residues 123–162 (PRSCKDLLTRGIFLTGWYTIYLPDCRPLTVLCDMDVDGGG) are a domain; contributes to trimerization. The interval 163 to 251 (WTVFQRRVDG…LTLGQFLEGT (89 aa)) is b domain; contributes to trimerization. Position 270 (aspartate 270) interacts with Ca(2+). Asparagine 271 carries N-linked (GlcNAc...) asparagine glycosylation. A Ca(2+)-binding site is contributed by aspartate 272. A disulfide bond links cysteine 279 and cysteine 292. 291-293 (DCH) is an a carbohydrate binding site. Positions 326–335 (KVAEMKIRAS) are p domain.

This sequence belongs to the ficolin lectin family. As to quaternary structure, homotrimer. Interacts with elastin/ELN. Interacts (via Fibrinogen C-terminal domain) with FFAR2. Interacts with CRP; may regulate monocyte activation by FCN1.

Its subcellular location is the secreted. The protein resides in the cell membrane. Functionally, extracellular lectin functioning as a pattern-recognition receptor in innate immunity. Binds the sugar moieties of pathogen-associated molecular patterns (PAMPs) displayed on microbes and activates the lectin pathway of the complement system. May also activate monocytes through a G protein-coupled receptor, FFAR2, inducing the secretion of interleukin-8/IL-8. Binds preferentially to 9-O-acetylated 2-6-linked sialic acid derivatives and to various glycans containing sialic acid engaged in a 2-3 linkage. The chain is Ficolin-1 (Fcn1) from Rattus norvegicus (Rat).